A 125-amino-acid chain; its full sequence is uncharacterized protein (125 aa).

It to transposase of insertion sequence IS6501.

This is an uncharacterized protein from Sinorhizobium fredii (strain NBRC 101917 / NGR234).